Reading from the N-terminus, the 30-residue chain is YRRRRRRGRRGRRRRGRRRRSRGRRRAHGG.

The disordered stretch occupies residues 1-30; sequence YRRRRRRGRRGRRRRGRRRRSRGRRRAHGG.

As to expression, testis.

It localises to the nucleus. Its subcellular location is the chromosome. Functionally, protamines substitute for histones in the chromatin of sperm during the haploid phase of spermatogenesis. They compact sperm DNA into a highly condensed, stable and inactive complex. This is Sperm protamine P5 from Octopus vulgaris (Common octopus).